The following is a 158-amino-acid chain: Large ribosomal subunit protein uL30 (158 aa).

It belongs to the universal ribosomal protein uL30 family. Part of the 50S ribosomal subunit.

This chain is Large ribosomal subunit protein uL30, found in Sulfurisphaera tokodaii (strain DSM 16993 / JCM 10545 / NBRC 100140 / 7) (Sulfolobus tokodaii).